A 232-amino-acid chain; its full sequence is 2-C-methyl-D-erythritol 4-phosphate cytidylyltransferase (232 aa).

This sequence belongs to the IspD/TarI cytidylyltransferase family. IspD subfamily.

It catalyses the reaction 2-C-methyl-D-erythritol 4-phosphate + CTP + H(+) = 4-CDP-2-C-methyl-D-erythritol + diphosphate. Its pathway is isoprenoid biosynthesis; isopentenyl diphosphate biosynthesis via DXP pathway; isopentenyl diphosphate from 1-deoxy-D-xylulose 5-phosphate: step 2/6. Catalyzes the formation of 4-diphosphocytidyl-2-C-methyl-D-erythritol from CTP and 2-C-methyl-D-erythritol 4-phosphate (MEP). The sequence is that of 2-C-methyl-D-erythritol 4-phosphate cytidylyltransferase from Rhodococcus erythropolis (strain PR4 / NBRC 100887).